We begin with the raw amino-acid sequence, 206 residues long: MSSQYSNVENLSPQTIRQVMKELQDMETTPPEGIKVLINESDVTDIQALIDGPAGTPYAVGIFRVKLTLSKDFPQTPPKAYFLTKIFHPNVAANGEICVNTLKKDWKPDLGIKHILLTIKCLLIVPNPESALNEEAGKMLLERYDDYSQRARMMTEIHAQPVKCGVSDAKDDDGPSNKKHAGLDKKLQDKKKEKLLKEKKRMLKRL.

The region spanning 14–160 is the UBC core domain; that stretch reads QTIRQVMKEL…ARMMTEIHAQ (147 aa). Cys98 (glycyl thioester intermediate) is an active-site residue. A disordered region spans residues 165–191; it reads GVSDAKDDDGPSNKKHAGLDKKLQDKK. Basic and acidic residues predominate over residues 168-191; it reads DAKDDDGPSNKKHAGLDKKLQDKK.

The protein belongs to the ubiquitin-conjugating enzyme family.

The catalysed reaction is S-ubiquitinyl-[E1 ubiquitin-activating enzyme]-L-cysteine + [E2 ubiquitin-conjugating enzyme]-L-cysteine = [E1 ubiquitin-activating enzyme]-L-cysteine + S-ubiquitinyl-[E2 ubiquitin-conjugating enzyme]-L-cysteine.. Its pathway is protein modification; protein ubiquitination. In terms of biological role, catalyzes the covalent attachment of ubiquitin to other proteins. Acts as an essential factor of the anaphase promoting complex/cyclosome (APC/C), a cell cycle-regulated ubiquitin ligase that controls progression through mitosis. Acts by specifically elongating polyubiquitin chains initiated by the E2 enzyme vih/UbcH10 on APC/C substrates, enhancing the degradation of APC/C substrates by the proteasome and promoting mitotic exit. The sequence is that of Ubiquitin-conjugating enzyme E2 S from Drosophila mojavensis (Fruit fly).